The following is a 461-amino-acid chain: Smoothelin-like protein 2 (461 aa).

Residues 55 to 88 (PLARTVADLQRDNQRLQAQLERLTRQVEALGLAS) are a coiled coil. Disordered regions lie at residues 87 to 193 (ASGM…LRLP) and 227 to 248 (LNPS…KNSS). Pro residues predominate over residues 94-107 (PGTPGTPSPPPAPG). Threonine 96 is modified (phosphothreonine). Phosphoserine occurs at positions 101, 129, and 134. Basic and acidic residues predominate over residues 134–147 (SLDHDEASESEMRK). 2 positions are modified to phosphoserine: serine 256 and serine 269. The segment at 260–307 (AVTASKHSNSPPLVTPPQSPVSPQPPAITQVHRQGERRRELVRSQTLP) is disordered. Pro residues predominate over residues 272-285 (LVTPPQSPVSPQPP). Threonine 274 carries the phosphothreonine modification. Position 278 is a phosphoserine (serine 278). A compositionally biased stretch (basic and acidic residues) spans 292–301 (RQGERRRELV). The residue at position 344 (serine 344) is a Phosphoserine. Positions 351 to 458 (SSIKQILLEW…YVQSLYNHLR (108 aa)) constitute a Calponin-homology (CH) domain.

Belongs to the smoothelin family.

This is Smoothelin-like protein 2 (SMTNL2) from Homo sapiens (Human).